The primary structure comprises 414 residues: Dihydroorotase (414 aa).

Zn(2+)-binding residues include histidine 57 and histidine 59. Substrate is bound by residues 59 to 61 and asparagine 91; that span reads HLR. Positions 135, 164, 204, and 272 each coordinate Zn(2+). N6-carboxylysine is present on lysine 135. Residue aspartate 272 is part of the active site. Substrate contacts are provided by residues histidine 276 and 286-287; that span reads AG.

Belongs to the metallo-dependent hydrolases superfamily. DHOase family. Class I DHOase subfamily. Zn(2+) is required as a cofactor.

It catalyses the reaction (S)-dihydroorotate + H2O = N-carbamoyl-L-aspartate + H(+). It participates in pyrimidine metabolism; UMP biosynthesis via de novo pathway; (S)-dihydroorotate from bicarbonate: step 3/3. Catalyzes the reversible cyclization of carbamoyl aspartate to dihydroorotate. The sequence is that of Dihydroorotase from Pyrococcus furiosus (strain ATCC 43587 / DSM 3638 / JCM 8422 / Vc1).